A 390-amino-acid polypeptide reads, in one-letter code: Glutamate 5-kinase (390 aa).

Residue K29 participates in ATP binding. Positions 69, 156, and 168 each coordinate substrate. Position 188–189 (T188–D189) interacts with ATP. The region spanning S295–N374 is the PUA domain.

Belongs to the glutamate 5-kinase family.

It is found in the cytoplasm. The enzyme catalyses L-glutamate + ATP = L-glutamyl 5-phosphate + ADP. It functions in the pathway amino-acid biosynthesis; L-proline biosynthesis; L-glutamate 5-semialdehyde from L-glutamate: step 1/2. Its function is as follows. Catalyzes the transfer of a phosphate group to glutamate to form L-glutamate 5-phosphate. In Psychrobacter cryohalolentis (strain ATCC BAA-1226 / DSM 17306 / VKM B-2378 / K5), this protein is Glutamate 5-kinase.